We begin with the raw amino-acid sequence, 281 residues long: Acetyl-coenzyme A carboxylase carboxyl transferase subunit beta 2 (281 aa).

In terms of domain architecture, CoA carboxyltransferase N-terminal spans 26-281; sequence LLTRCPVCHE…TITQGGHQDV (256 aa). Residues C30, C33, C48, and C51 each contribute to the Zn(2+) site. The C4-type zinc finger occupies 30–51; that stretch reads CPVCHEDCYTQDLGEFKVCPHC.

This sequence belongs to the AccD/PCCB family. In terms of assembly, acetyl-CoA carboxylase is a heterohexamer composed of biotin carboxyl carrier protein (AccB), biotin carboxylase (AccC) and two subunits each of ACCase subunit alpha (AccA) and ACCase subunit beta (AccD). It depends on Zn(2+) as a cofactor.

It localises to the cytoplasm. The catalysed reaction is N(6)-carboxybiotinyl-L-lysyl-[protein] + acetyl-CoA = N(6)-biotinyl-L-lysyl-[protein] + malonyl-CoA. The protein operates within lipid metabolism; malonyl-CoA biosynthesis; malonyl-CoA from acetyl-CoA: step 1/1. In terms of biological role, component of the acetyl coenzyme A carboxylase (ACC) complex. Biotin carboxylase (BC) catalyzes the carboxylation of biotin on its carrier protein (BCCP) and then the CO(2) group is transferred by the transcarboxylase to acetyl-CoA to form malonyl-CoA. In Lactiplantibacillus plantarum (strain JDM1) (Lactobacillus plantarum), this protein is Acetyl-coenzyme A carboxylase carboxyl transferase subunit beta 2.